We begin with the raw amino-acid sequence, 977 residues long: Alanine--tRNA ligase (977 aa).

A disordered region spans residues 512 to 535; it reads SQVDSKLQSSTPAGTGSYDSKQVS. 4 residues coordinate Zn(2+): His-618, His-622, Cys-720, and His-724.

This sequence belongs to the class-II aminoacyl-tRNA synthetase family. Zn(2+) is required as a cofactor.

The protein localises to the cytoplasm. The catalysed reaction is tRNA(Ala) + L-alanine + ATP = L-alanyl-tRNA(Ala) + AMP + diphosphate. In terms of biological role, catalyzes the attachment of alanine to tRNA(Ala) in a two-step reaction: alanine is first activated by ATP to form Ala-AMP and then transferred to the acceptor end of tRNA(Ala). Also edits incorrectly charged Ser-tRNA(Ala) and Gly-tRNA(Ala) via its editing domain. The chain is Alanine--tRNA ligase from Leptospira interrogans serogroup Icterohaemorrhagiae serovar Lai (strain 56601).